A 418-amino-acid chain; its full sequence is NADH-quinone oxidoreductase subunit D (418 aa).

The protein belongs to the complex I 49 kDa subunit family. NDH-1 is composed of 14 different subunits. Subunits NuoB, C, D, E, F, and G constitute the peripheral sector of the complex.

It is found in the cell inner membrane. The catalysed reaction is a quinone + NADH + 5 H(+)(in) = a quinol + NAD(+) + 4 H(+)(out). In terms of biological role, NDH-1 shuttles electrons from NADH, via FMN and iron-sulfur (Fe-S) centers, to quinones in the respiratory chain. The immediate electron acceptor for the enzyme in this species is believed to be ubiquinone. Couples the redox reaction to proton translocation (for every two electrons transferred, four hydrogen ions are translocated across the cytoplasmic membrane), and thus conserves the redox energy in a proton gradient. The chain is NADH-quinone oxidoreductase subunit D from Methylacidiphilum infernorum (isolate V4) (Methylokorus infernorum (strain V4)).